The following is a 268-amino-acid chain: NH(3)-dependent NAD(+) synthetase (268 aa).

Position 46–53 (46–53) interacts with ATP; the sequence is GVSGGQDS. Asp52 contributes to the Mg(2+) binding site. Arg140 is a deamido-NAD(+) binding site. Thr160 is an ATP binding site. Residue Glu165 participates in Mg(2+) binding. Lys173 and Asp180 together coordinate deamido-NAD(+). Lys189 is an ATP binding site. 260-261 serves as a coordination point for deamido-NAD(+); the sequence is HK.

The protein belongs to the NAD synthetase family. In terms of assembly, homodimer.

The enzyme catalyses deamido-NAD(+) + NH4(+) + ATP = AMP + diphosphate + NAD(+) + H(+). It participates in cofactor biosynthesis; NAD(+) biosynthesis; NAD(+) from deamido-NAD(+) (ammonia route): step 1/1. Its function is as follows. Catalyzes the ATP-dependent amidation of deamido-NAD to form NAD. Uses ammonia as a nitrogen source. The polypeptide is NH(3)-dependent NAD(+) synthetase (Buchnera aphidicola subsp. Acyrthosiphon pisum (strain APS) (Acyrthosiphon pisum symbiotic bacterium)).